The following is an 876-amino-acid chain: Leucine--tRNA ligase (876 aa).

The disordered stretch occupies residues 1–20; the sequence is MATERYNPRDAEPRWQQKWN. The 'HIGH' region motif lies at 43 to 53; sequence PYPSGRIHMGH. Positions 632–636 match the 'KMSKS' region motif; that stretch reads KMSKS. Lys-635 provides a ligand contact to ATP.

The protein belongs to the class-I aminoacyl-tRNA synthetase family.

It localises to the cytoplasm. It catalyses the reaction tRNA(Leu) + L-leucine + ATP = L-leucyl-tRNA(Leu) + AMP + diphosphate. The polypeptide is Leucine--tRNA ligase (Rhizobium leguminosarum bv. trifolii (strain WSM2304)).